The chain runs to 289 residues: Glyceraldehyde-3-phosphate dehydrogenase (289 aa).

Asp-12 and Arg-57 together coordinate NAD(+). Residues 128–130 (SCT), Thr-159, 188–189 (TG), and Arg-211 contribute to the D-glyceraldehyde 3-phosphate site. Catalysis depends on Cys-129, which acts as the Nucleophile.

The protein belongs to the glyceraldehyde-3-phosphate dehydrogenase family. As to quaternary structure, homotetramer.

Its subcellular location is the cytoplasm. It carries out the reaction D-glyceraldehyde 3-phosphate + phosphate + NAD(+) = (2R)-3-phospho-glyceroyl phosphate + NADH + H(+). It functions in the pathway carbohydrate degradation; glycolysis; pyruvate from D-glyceraldehyde 3-phosphate: step 1/5. This is Glyceraldehyde-3-phosphate dehydrogenase (GPD) from Amanita muscaria (Fly agaric).